The sequence spans 907 residues: Leucine-rich repeat-containing G-protein coupled receptor 5 (907 aa).

Positions 1–21 (MDTSCVHMLLSLLALLQLVAA) are cleaved as a signal peptide. The Extracellular portion of the chain corresponds to 22-561 (GSSPGPDAIP…EHLFGSWLIR (540 aa)). The LRRNT domain maps to 25–66 (PGPDAIPRGCPSHCHCELDGRMLLRVDCSDLGLSELPSNLSV). Disulfide bonds link cysteine 34–cysteine 40 and cysteine 38–cysteine 52. Residues asparagine 63 and asparagine 77 are each glycosylated (N-linked (GlcNAc...) asparagine). LRR repeat units follow at residues 67-88 (FTSY…LLHR), 91-112 (FLEE…AFTG), 115-136 (SLKV…ALQN), 139-160 (SLQS…CFSG), 163-184 (SLRH…AFRS), 187-208 (ALQA…AFGN), 211-232 (SLVV…CFDG), 235-256 (SLET…IKTL), 258-279 (NLKE…AFVG), 282-303 (SLIT…AFQH), 306-325 (ELRT…PHLT), 329-350 (TLES…VCDQ), 353-374 (NLQV…SGCQ), 375-396 (KLQK…TFQQ), 399-420 (NLRS…AFST), and 423-446 (SLIK…HGLT). Asparagine 208 carries N-linked (GlcNAc...) asparagine glycosylation. Cysteine 348 and cysteine 373 are disulfide-bonded. A disulfide bond links cysteine 479 and cysteine 541. The helical transmembrane segment at 562–582 (IGVWTTAVLALSCNALVALTV) threads the bilayer. Over 583-593 (FRTPLYISSIK) the chain is Cytoplasmic. A helical membrane pass occupies residues 594–614 (LLIGVIAVVDILMGVSSAVLA). The Extracellular portion of the chain corresponds to 615–638 (AVDAFTFGRFAQHGAWWEDGIGCQ). Residues cysteine 637 and cysteine 712 are joined by a disulfide bond. A helical membrane pass occupies residues 639-659 (IVGFLSIFASESSIFLLTLAA). The Cytoplasmic portion of the chain corresponds to 660–682 (LERGFSVKCSSKFEVKAPLFSLR). A helical membrane pass occupies residues 683 to 703 (AIVLLCVLLALTIATIPLLGG). The Extracellular portion of the chain corresponds to 704 to 723 (SKYNASPLCLPLPFGEPSTT). Residues 724-744 (GYMVALVLLNSLCFLIMTIAY) form a helical membrane-spanning segment. Over 745–767 (TKLYCSLEKGELENLWDCSMVKH) the chain is Cytoplasmic. A helical transmembrane segment spans residues 768–788 (IALLLFANCILYCPVAFLSFS). At 789–802 (SLLNLTFISPDVIK) the chain is on the extracellular side. N-linked (GlcNAc...) asparagine glycosylation occurs at asparagine 792. Residues 803 to 823 (FILLVIVPLPSCLNPLLYIVF) traverse the membrane as a helical segment. At 824–907 (NPHFKEDMGS…LSSVAFVPCL (84 aa)) the chain is on the cytoplasmic side.

Belongs to the G-protein coupled receptor 1 family. As to quaternary structure, identified in a complex composed of RNF43, LGR5 and RSPO1. Also interacts with other R-spondin ligands, including RSPO2, RSPO3 and RSPO4. Expressed in the intestinal epithelium (at protein level). Expressed in the gonads, the adrenal gland, and in the brain. In the central nervous system expression is restricted to the olfactory bulb. In the adrenal gland detected only in the neural-crest derived chromaffin cells of the medulla, but not in the cells of the adrenal cortex. In the gonads, the expression is high in Graafian follicle, but absent from primary and secondary follicles. In the intestine, exclusively expressed in cycling crypt base columnar cells. Expressed in the lower bulge and secondary germ area of telogen hair follicles and in the lower outer root sheath of anagen hair follicle.

It is found in the cell membrane. Its subcellular location is the golgi apparatus. The protein resides in the trans-Golgi network membrane. In terms of biological role, receptor for R-spondins that potentiates the canonical Wnt signaling pathway and acts as a stem cell marker of the intestinal epithelium and the hair follicle. Upon binding to R-spondins (RSPO1, RSPO2, RSPO3 or RSPO4), associates with phosphorylated LRP6 and frizzled receptors that are activated by extracellular Wnt receptors, triggering the canonical Wnt signaling pathway to increase expression of target genes. In contrast to classical G-protein coupled receptors, does not activate heterotrimeric G-proteins to transduce the signal. Involved in the development and/or maintenance of the adult intestinal stem cells during postembryonic development. In Mus musculus (Mouse), this protein is Leucine-rich repeat-containing G-protein coupled receptor 5 (Lgr5).